Here is a 258-residue protein sequence, read N- to C-terminus: Ditrans,polycis-undecaprenyl-diphosphate synthase ((2E,6E)-farnesyl-diphosphate specific) (258 aa).

The active site involves aspartate 24. Aspartate 24 contributes to the Mg(2+) binding site. Substrate-binding positions include 25 to 28 (GNGR), tryptophan 29, arginine 37, histidine 41, and 69 to 71 (SSE). Asparagine 72 functions as the Proton acceptor in the catalytic mechanism. Residues tryptophan 73, arginine 75, arginine 192, and 198–200 (RIS) each bind substrate. Glutamate 211 serves as a coordination point for Mg(2+).

The protein belongs to the UPP synthase family. In terms of assembly, homodimer. The cofactor is Mg(2+).

The catalysed reaction is 8 isopentenyl diphosphate + (2E,6E)-farnesyl diphosphate = di-trans,octa-cis-undecaprenyl diphosphate + 8 diphosphate. Its function is as follows. Catalyzes the sequential condensation of isopentenyl diphosphate (IPP) with (2E,6E)-farnesyl diphosphate (E,E-FPP) to yield (2Z,6Z,10Z,14Z,18Z,22Z,26Z,30Z,34E,38E)-undecaprenyl diphosphate (di-trans,octa-cis-UPP). UPP is the precursor of glycosyl carrier lipid in the biosynthesis of bacterial cell wall polysaccharide components such as peptidoglycan and lipopolysaccharide. In Xanthomonas oryzae pv. oryzae (strain KACC10331 / KXO85), this protein is Ditrans,polycis-undecaprenyl-diphosphate synthase ((2E,6E)-farnesyl-diphosphate specific).